Reading from the N-terminus, the 368-residue chain is 3-dehydroquinate synthase (368 aa).

NAD(+) is bound by residues 69–74 (DGEAYK), 103–107 (GVIGD), 127–128 (TT), lysine 140, and lysine 149. Residues glutamate 182, histidine 245, and histidine 262 each coordinate Zn(2+).

It belongs to the sugar phosphate cyclases superfamily. Dehydroquinate synthase family. It depends on Co(2+) as a cofactor. The cofactor is Zn(2+). NAD(+) is required as a cofactor.

Its subcellular location is the cytoplasm. It carries out the reaction 7-phospho-2-dehydro-3-deoxy-D-arabino-heptonate = 3-dehydroquinate + phosphate. The protein operates within metabolic intermediate biosynthesis; chorismate biosynthesis; chorismate from D-erythrose 4-phosphate and phosphoenolpyruvate: step 2/7. In terms of biological role, catalyzes the conversion of 3-deoxy-D-arabino-heptulosonate 7-phosphate (DAHP) to dehydroquinate (DHQ). The sequence is that of 3-dehydroquinate synthase from Pseudomonas aeruginosa (strain LESB58).